The sequence spans 372 residues: Cytochrome b (372 aa).

4 helical membrane passes run 25-45, 69-90, 105-125, and 170-190; these read FGSM…FLAI, WIMQ…YIHI, WLSG…GYVL, and FFAL…IHII. Positions 75 and 89 each coordinate heme b. H174 and H188 together coordinate heme b. H193 lines the a ubiquinone pocket. A run of 4 helical transmembrane segments spans residues 218–238, 280–300, 312–332, and 339–358; these read YKDM…LSFS, LGGA…PFTH, LSQI…WTAS, and FISI…ITIP.

The protein belongs to the cytochrome b family. The cytochrome bc1 complex contains 3 respiratory subunits (MT-CYB, CYC1 and UQCRFS1), 2 core proteins (UQCRC1 and UQCRC2) and probably 6 low-molecular weight proteins. Requires heme b as cofactor.

It is found in the mitochondrion inner membrane. Component of the ubiquinol-cytochrome c reductase complex (complex III or cytochrome b-c1 complex) that is part of the mitochondrial respiratory chain. The b-c1 complex mediates electron transfer from ubiquinol to cytochrome c. Contributes to the generation of a proton gradient across the mitochondrial membrane that is then used for ATP synthesis. This chain is Cytochrome b (MT-CYB), found in Naja annulata annulata (Banded water cobra).